A 247-amino-acid polypeptide reads, in one-letter code: tRNA pseudouridine synthase A (247 aa).

The Nucleophile role is filled by Asp53. Residue Tyr111 coordinates substrate.

It belongs to the tRNA pseudouridine synthase TruA family. As to quaternary structure, homodimer.

The catalysed reaction is uridine(38/39/40) in tRNA = pseudouridine(38/39/40) in tRNA. Its function is as follows. Formation of pseudouridine at positions 38, 39 and 40 in the anticodon stem and loop of transfer RNAs. In Bacillus subtilis (strain 168), this protein is tRNA pseudouridine synthase A.